A 115-amino-acid chain; its full sequence is NADH-ubiquinone oxidoreductase chain 3 (115 aa).

A run of 3 helical transmembrane segments spans residues 3 to 23 (LMLA…IAFW), 55 to 75 (FFLV…LLPL), and 84 to 104 (LNTM…SLAY).

It belongs to the complex I subunit 3 family. As to quaternary structure, core subunit of respiratory chain NADH dehydrogenase (Complex I) which is composed of 45 different subunits. Interacts with TMEM186. Interacts with TMEM242.

The protein resides in the mitochondrion inner membrane. The catalysed reaction is a ubiquinone + NADH + 5 H(+)(in) = a ubiquinol + NAD(+) + 4 H(+)(out). Functionally, core subunit of the mitochondrial membrane respiratory chain NADH dehydrogenase (Complex I) which catalyzes electron transfer from NADH through the respiratory chain, using ubiquinone as an electron acceptor. Essential for the catalytic activity of complex I. The polypeptide is NADH-ubiquinone oxidoreductase chain 3 (Bos indicus (Zebu)).